Reading from the N-terminus, the 1563-residue chain is GHGAVTSPQTQRGYTAFVHTKLSRVIGASGIHTGTMSFGKMEGDASDKNIGFMLQDDVADGPYYRQEWEGMKQTTPIISGGMNALRLPAFFENLGHSNVILTAGGGAFGHKDGPKQGAISCAQGEESWKLWKAGTYGDVSLSDGVVEYAKTHEELKGAFLTFQKDADQIYPGWKEKLGYTGESSVQAASFNWQKKDLAAAFVGASTTRKASSVARRALDQSSRYADLSLTEEDLIKNGQHVLVAYIMKPKAGYDYLATAAHFAAESSTGTNVNVCTTDDFTKTVDALVYYIDPENEEMKIAYPTALFDRNITDGRAMMCSVLTLSIGNNQGMGDVDYGKIYDIYFPPQYLRLFDGPSCCVIDMWRILGRGTVGGGLVVGTIIKPKLGLQPKPFGQACYGFWQGGDFIKNDEPQGNQTFCQMNECIPEVVKAMRAAQEETGQGKLFSANITADDPNEMIARAKYILNQMGPMAENCAFLVDGYVAGGTAVTVARRNFPKQFLHYHRAGHGAVTSPQTQRGYTAFVHTKLSRVIGASGIHTGTMSFGKMEGDASDKNIGFMLQDDVADGPYYRQEWEGMKQTTPIISGGMNALRLPAFFENLGHSNVILTAGGGAFGHKDGPKQGAISCAQGEESWKLWKAGTYGDVSLSDGVVEYAKTHEELKGAFLTFQKDADQIYPGWKEKLGYTGESSVQAASFNWQKKDLAAAFVGASTTRKASSVARRALDQSSRYADLSLTEEDLIKNGQHVLVAYIMKPKAGYDYLATAAHFAAESSTGTNVNVCTTDDFTKTVDALVYYIDPENEEMKIAYPTALFDRNITDGRAMMCSVLTLSIGNNQGMGDVDYGKIYDIYFPPQYLRLFDGPSCCVIDMWRILGRGTVGGGLVVGTIIKPKLGLQPKPFGQACYGFWQGGDFIKNDEPQGNQTFCQMNECIPEVVKAMRAAQEETGQGKLFSANITADDPNEMIARAKYILNQMGPMAENCAFLVDGYVAGGTAVTVARRNFPKQFLHYHRAGHGAVTSPQTQRGYTAFVHTKLSRVIGASGIHTGTMSFGKMEGDASDKNIGFMLQDDVADGPYYRQEWEGMKQTTPIISGGMNALRLPAFFENLGHSNVILTAGGGAFGHKDGPKQGAISCAQGEESWKLWKAGTYGDVSLSDGVVEYAKTHEELKGAFLTFQKDADQIYPGWKEKLGYTGESSVQAASFNWQKKDLAAAFVGASTTRKASSVARRALDQSSRYADLSLTEEDLIKNGQHVLVAYIMKPKAGYDYLATAAHFAAESSTGTNVNVCTTDDFTKTVDALVYYIDPENEEMKIAYPTALFDRNITDGRAMMCSVLTLSIGNNQGMGDVDYGKIYDIYFPPQYLRLFDGPSCCVIDMWRILGRGTVGGGLVVGTIIKPKLGLQPKPFGQACYGFWQGGDFIKNDEPQGNQTFCQMNECIPEVVKAMRAAQEETGQGKLFSANITADDPNEMIARAKYILNQMGPMAENCAFLVDGYVAGGTAVTVARRNFPKQFLHYHRAGHGAVTSPQTQRGYTAFVHTKLSRVIGASGIHTGTMSFGKMEGDA.

2 residues coordinate substrate: histidine 32 and serine 79. The propeptide at leucine 197 to alanine 217 is linker. Asparagine 328 serves as a coordination point for substrate. Residue lysine 383 is the Proton acceptor of the active site. Position 385 (lysine 385) interacts with substrate. Mg(2+) is bound by residues lysine 408, aspartate 410, and glutamate 411. Position 408 is an N6-carboxylysine (lysine 408). The active-site Proton acceptor is histidine 504. Substrate-binding residues include arginine 505, histidine 538, and serine 585. The propeptide at leucine 703 to alanine 723 is linker. A substrate-binding site is contributed by asparagine 834. Lysine 889 serves as the catalytic Proton acceptor. Lysine 891 is a substrate binding site. Residues lysine 914, aspartate 916, and glutamate 917 each contribute to the Mg(2+) site. N6-carboxylysine is present on lysine 914. The active-site Proton acceptor is the histidine 1010. Residues arginine 1011, histidine 1044, and serine 1091 each contribute to the substrate site. Residues leucine 1209 to alanine 1229 constitute a propeptide, linker. A substrate-binding site is contributed by asparagine 1340. The active-site Proton acceptor is lysine 1395. Lysine 1397 contacts substrate. Mg(2+) is bound by residues lysine 1420, aspartate 1422, and glutamate 1423. The residue at position 1420 (lysine 1420) is an N6-carboxylysine. The Proton acceptor role is filled by histidine 1516. Residues arginine 1517 and histidine 1550 each coordinate substrate.

The protein belongs to the RuBisCO large chain family. Type II subfamily. As to quaternary structure, homodimer. The cofactor is Mg(2+). In terms of processing, in Western blots an approximately 220 kDa polyprotein and 2 smaller proteins of about 55 and 52 kDa are detected, suggesting the polyprotein may be cleaved at one end of the linker and then at the other end to give mature RuBisCO.

It localises to the plastid. It is found in the chloroplast. The enzyme catalyses 2 (2R)-3-phosphoglycerate + 2 H(+) = D-ribulose 1,5-bisphosphate + CO2 + H2O. The catalysed reaction is D-ribulose 1,5-bisphosphate + O2 = 2-phosphoglycolate + (2R)-3-phosphoglycerate + 2 H(+). In terms of biological role, ruBisCO catalyzes two reactions: the carboxylation of D-ribulose 1,5-bisphosphate, the primary event in carbon dioxide fixation, as well as the oxidative fragmentation of the pentose substrate. Both reactions occur simultaneously and in competition at the same active site. The chain is Ribulose bisphosphate carboxylase (rbcL) from Prorocentrum minimum (Dinoflagellate).